We begin with the raw amino-acid sequence, 158 residues long: Transcription elongation factor GreB (158 aa).

A coiled-coil region spans residues 53-75 (KRRLREIDRRVRFLTKRLEVLQI).

Belongs to the GreA/GreB family. GreB subfamily.

In terms of biological role, necessary for efficient RNA polymerase transcription elongation past template-encoded arresting sites. The arresting sites in DNA have the property of trapping a certain fraction of elongating RNA polymerases that pass through, resulting in locked ternary complexes. Cleavage of the nascent transcript by cleavage factors such as GreA or GreB allows the resumption of elongation from the new 3'terminus. GreB releases sequences of up to 9 nucleotides in length. The protein is Transcription elongation factor GreB of Pasteurella multocida (strain Pm70).